The sequence spans 476 residues: Eukaryotic translation initiation factor 3 subunit L (476 aa).

One can recognise a PCI domain in the interval 257-452 (DAIRMFSHIL…DLDYALENDL (196 aa)).

The protein belongs to the eIF-3 subunit L family. As to quaternary structure, component of the eukaryotic translation initiation factor 3 (eIF-3) complex.

The protein localises to the cytoplasm. Component of the eukaryotic translation initiation factor 3 (eIF-3) complex, which is involved in protein synthesis of a specialized repertoire of mRNAs and, together with other initiation factors, stimulates binding of mRNA and methionyl-tRNAi to the 40S ribosome. The eIF-3 complex specifically targets and initiates translation of a subset of mRNAs involved in cell proliferation. This is Eukaryotic translation initiation factor 3 subunit L from Aspergillus oryzae (strain ATCC 42149 / RIB 40) (Yellow koji mold).